We begin with the raw amino-acid sequence, 928 residues long: Probable outer membrane protein pmp11 (928 aa).

The signal sequence occupies residues 1–24 (MKTSIPWVLVSSVLAFSCHLQSLA). Residues 627 to 928 (GMEHKQGFWV…NVDVGTKLRF (302 aa)) form the Autotransporter domain.

The protein belongs to the PMP outer membrane protein family.

It is found in the secreted. The protein resides in the cell wall. It localises to the cell outer membrane. In Chlamydia pneumoniae (Chlamydophila pneumoniae), this protein is Probable outer membrane protein pmp11 (pmp11).